A 436-amino-acid polypeptide reads, in one-letter code: uncharacterized protein (436 aa).

This is an uncharacterized protein from Arabidopsis thaliana (Mouse-ear cress).